Consider the following 448-residue polypeptide: Probable cytosolic Fe-S cluster assembly factor Bm6838 (448 aa).

The [4Fe-4S] cluster site is built by Cys27, Cys66, Cys69, Cys72, Cys170, Cys226, Cys370, and Cys374.

Belongs to the NARF family.

Functionally, component of the cytosolic iron-sulfur (Fe/S) protein assembly machinery. Required for maturation of extramitochondrial Fe/S proteins. The polypeptide is Probable cytosolic Fe-S cluster assembly factor Bm6838 (Brugia malayi (Filarial nematode worm)).